Reading from the N-terminus, the 328-residue chain is Helicase VP6-A (328 aa).

2 disordered regions span residues 31-128 (DWTE…TGAN) and 180-237 (VAEQ…SVGI). Composition is skewed to basic and acidic residues over residues 36–61 (ETNK…EGRN), 71–83 (AKET…DRRI), and 96–109 (PGER…RGDG). Lys-110 is an ATP binding site. Positions 110–128 (KVGGGGGDADAGVGTTGAN) are enriched in gly residues. Composition is skewed to basic and acidic residues over residues 180-205 (VAEQ…AAER) and 214-230 (PHGD…KTSE).

Belongs to the orbivirus VP6 family. As to quaternary structure, homohexamer.

It is found in the virion. The catalysed reaction is ATP + H2O = ADP + phosphate + H(+). Its function is as follows. ATP dependent RNA helicase essential for RNA packaging and viral transcription. Possesses ss- and dsRNA-binding capacity. In Bluetongue virus 1 (isolate South Africa) (BTV 1), this protein is Helicase VP6-A (Segment-9).